The following is a 244-amino-acid chain: tRNA (guanine-N(7)-)-methyltransferase (244 aa).

Positions 75, 100, 127, and 150 each coordinate S-adenosyl-L-methionine. Asp150 is a catalytic residue. Substrate is bound by residues Lys154, Asp186, and 223–226; that span reads TRFE.

It belongs to the class I-like SAM-binding methyltransferase superfamily. TrmB family.

It carries out the reaction guanosine(46) in tRNA + S-adenosyl-L-methionine = N(7)-methylguanosine(46) in tRNA + S-adenosyl-L-homocysteine. The protein operates within tRNA modification; N(7)-methylguanine-tRNA biosynthesis. In terms of biological role, catalyzes the formation of N(7)-methylguanine at position 46 (m7G46) in tRNA. The protein is tRNA (guanine-N(7)-)-methyltransferase of Xylella fastidiosa (strain 9a5c).